Consider the following 171-residue polypeptide: MDLKAKLREVPDFPKEGINFIDITTVLQDPEALKECIDSMKKKVESFGEFDIIVGAESRGFIFGAPLAYALGKGFVPIRKKGKLPYKTISVEYELEYGTDILEMHIDAIKKGQRVVIVDDLLATGGTTKSNIKLVEQLGGEILGIVYFVELTFLNGREKLKGYNVESIVQY.

It belongs to the purine/pyrimidine phosphoribosyltransferase family. In terms of assembly, homodimer.

Its subcellular location is the cytoplasm. The enzyme catalyses AMP + diphosphate = 5-phospho-alpha-D-ribose 1-diphosphate + adenine. Its pathway is purine metabolism; AMP biosynthesis via salvage pathway; AMP from adenine: step 1/1. In terms of biological role, catalyzes a salvage reaction resulting in the formation of AMP, that is energically less costly than de novo synthesis. This is Adenine phosphoribosyltransferase from Acetivibrio thermocellus (strain ATCC 27405 / DSM 1237 / JCM 9322 / NBRC 103400 / NCIMB 10682 / NRRL B-4536 / VPI 7372) (Clostridium thermocellum).